The following is a 320-amino-acid chain: Malate dehydrogenase (320 aa).

NAD(+)-binding positions include glycine 10–glycine 15 and aspartate 34. Substrate is bound by residues arginine 83 and arginine 89. NAD(+) is bound by residues asparagine 96 and isoleucine 119–asparagine 121. Substrate contacts are provided by asparagine 121 and arginine 152. Histidine 176 acts as the Proton acceptor in catalysis.

The protein belongs to the LDH/MDH superfamily. MDH type 3 family.

It catalyses the reaction (S)-malate + NAD(+) = oxaloacetate + NADH + H(+). Catalyzes the reversible oxidation of malate to oxaloacetate. The sequence is that of Malate dehydrogenase from Novosphingobium aromaticivorans (strain ATCC 700278 / DSM 12444 / CCUG 56034 / CIP 105152 / NBRC 16084 / F199).